The primary structure comprises 286 residues: MAAPGPGAGAASGGASGGGAGAGGGASAGSGSSGVGGRLPSRVLELVFSYLELSELRSCALVCKHWYRCLHGDENSEVWRSLCARSLAEEALRTDILCNLPSYKAKVRAFQHAFSTNDCSRNVYIKKNGFTLHRNPIAQSTDGARTKIGFSEGRHAWEVWWEGPLGTVAVIGIATKRAPMQCQGYVALLGSDDQSWGWNLVDNNLLHNGEVNGSFPQCNNAPKYQIGERIRVILDMEDKTLAFERGYEFLGVAFRGLPKACLYPAVSAVYGNTEVTLVYLGKPLDG.

Residue Ala-2 is modified to N-acetylalanine. In terms of domain architecture, F-box spans 33-82; sequence SGVGGRLPSRVLELVFSYLELSELRSCALVCKHWYRCLHGDENSEVWRSL. The region spanning 92-284 is the B30.2/SPRY domain; sequence LRTDILCNLP…VTLVYLGKPL (193 aa).

The protein belongs to the FBXO45/Fsn family. As to quaternary structure, forms a complex with MYCBP2 and SKP1. Interacts with HEY1; leading to FBXO45 nuclear translocation. Interacts (via SPRY domain) with CDH2. In terms of tissue distribution, expressed speciffically in the central nervous system, including cerebellum, medulla oblongata, olfactory bulb, hippocampus, cortex and brain stem.

It is found in the secreted. The protein resides in the postsynaptic cell membrane. Its subcellular location is the presynaptic cell membrane. The protein localises to the nucleus. It participates in protein modification; protein ubiquitination. Its function is as follows. Component of E3 ubiquitin ligase complex consisting of FBXO45, MYCBP2 and SKP1. Functions in substrate recognition but plays also an important role in assembly of the complex. Required for normal neuromuscular synaptogenesis, axon pathfinding and neuronal migration. Regulates neuron migration during brain development through interaction with N-cadherin/CDH2 after secretion via a non-classical mechanism. Plays a role in the regulation of neurotransmission at mature neurons. May control synaptic activity by controlling UNC13A via ubiquitin dependent pathway. Specifically recognizes TP73, promoting its ubiquitination and degradation. Polyubiquitinates NMNAT2, an adenylyltransferase that acts as an axon maintenance factor, and regulates its stability and degradation by the proteasome. Acts also by ubiquitinating FBXW7 during prolonged mitotic arrest and promotes FBXW7 proteasomal degradation. Induces subsequently an increase in mitotic slippage and prevents mitotic cell death. In response to influenza infection, mediates interferon-lambda receptor IFNLR1 polyubiquitination and degradation through the ubiquitin-proteasome system by docking with its intracellular receptor domain. The chain is F-box/SPRY domain-containing protein 1 from Mus musculus (Mouse).